We begin with the raw amino-acid sequence, 264 residues long: Inner membrane ABC transporter permease protein YdcV (264 aa).

Topologically, residues 1–12 are cytoplasmic; the sequence is MHSERAPFFLKL. Residues 13 to 33 form a helical membrane-spanning segment; the sequence is AAWGGVVFLHFPILIIAAYAF. At 34–70 the chain is on the periplasmic side; that stretch reads NTEDAAFSFPPQGLTLRWFSVAAQRSDILDAVTLSLK. One can recognise an ABC transmembrane type-1 domain in the interval 65–252; it reads VTLSLKVAAL…MLVTTLPILG (188 aa). The helical transmembrane segment at 71–91 threads the bilayer; the sequence is VAALATLIALVLGTLAAAALW. The Cytoplasmic segment spans residues 92–100; the sequence is RRDFFGKNA. The helical transmembrane segment at 101–121 threads the bilayer; the sequence is ISLLLLLPIALPGIVTGLALL. Over 122–128 the chain is Periplasmic; that stretch reads TAFKTIN. Residues 129 to 149 form a helical membrane-spanning segment; that stretch reads LEPGFFTIVVGHATFCVVVVF. The Cytoplasmic segment spans residues 150–189; it reads NNVIARFRRTSWSLVEASMDLGANGWQTFRYVVLPNLSSA. A helical transmembrane segment spans residues 190-210; it reads LLAGGMLAFALSFDEIIVTTF. The Periplasmic segment spans residues 211–236; the sequence is TAGHERTLPLWLLNQLGRPRDVPVTN. The chain crosses the membrane as a helical span at residues 237–257; it reads VVALLVMLVTTLPILGAWWLT. The Cytoplasmic portion of the chain corresponds to 258–264; it reads REGDNGQ.

Belongs to the binding-protein-dependent transport system permease family. CysTW subfamily.

It localises to the cell inner membrane. Its function is as follows. Probably part of the ABC transporter complex YdcSTUV. Probably responsible for the translocation of the substrate across the membrane. This is Inner membrane ABC transporter permease protein YdcV (ydcV) from Shigella flexneri.